A 933-amino-acid polypeptide reads, in one-letter code: Progesterone receptor (933 aa).

Positions 1–157 (MTELKAKGPR…PEDPPAAPAT (157 aa)) are disordered. The segment at 1–164 (MTELKAKGPR…PATQRVLSPL (164 aa)) is AF3; mediates transcriptional activation (in isoform B). Positions 1–566 (MTELKAKGPR…YSFESLPQKI (566 aa)) are modulating, Pro-Rich. A Glycyl lysine isopeptide (Lys-Gly) (interchain with G-Cter in SUMO) cross-link involves residue lysine 7. A Phosphoserine modification is found at serine 20. The LXXL motif 1 signature appears at 55–59 (LDGLL). Residues serine 81 and serine 102 each carry the phosphoserine modification. Positions 115 to 119 (LDTLL) match the LXXL motif 2 motif. Phosphoserine occurs at positions 130 and 162. The mediates transcriptional transrepression (in isoform A) stretch occupies residues 165–305 (MSRSGCKVGD…LATTVMDFIH (141 aa)). A Nuclear localization signal motif is present at residues 183–187 (KVLPR). Residues serine 190 and serine 213 each carry the phosphoserine modification. A disordered region spans residues 195-241 (LLLPASESPHWSGAPVKPSPQAAAVEVEEEDGSESEESAGPLLKGKP). Residues 220–231 (EVEEEDGSESEE) are compositionally biased toward acidic residues. A compositionally biased stretch (low complexity) spans 232–241 (SAGPLLKGKP). At serine 294 the chain carries Phosphoserine; by MAPK1. The interval 331 to 351 (GGAGAASAFAPPRSSPCASST) is disordered. Low complexity predominate over residues 335-350 (AASAFAPPRSSPCASS). A Phosphoserine; by MAPK modification is found at serine 345. Residue lysine 388 forms a Glycyl lysine isopeptide (Lys-Gly) (interchain with G-Cter in SUMO); alternate linkage. Lysine 388 participates in a covalent cross-link: Glycyl lysine isopeptide (Lys-Gly) (interchain with G-Cter in ubiquitin); alternate. Serine 400 is subject to Phosphoserine; by CDK2. The segment at 415–452 (PDFPLGPPPPLPPRATPSRPGEAAVTAAPASASVSSAS) is disordered. Over residues 418-429 (PLGPPPPLPPRA) the composition is skewed to pro residues. The segment covering 430 to 452 (TPSRPGEAAVTAAPASASVSSAS) has biased composition (low complexity). The AF1; mediates transcriptional activation stretch occupies residues 456-546 (STLECILYKA…VYPPYLNYLR (91 aa)). Residue lysine 531 forms a Glycyl lysine isopeptide (Lys-Gly) (interchain with G-Cter in SUMO) linkage. 2 consecutive NR C4-type zinc fingers follow at residues 567 to 587 (CLIC…CGSC) and 603 to 627 (CAGR…LRKC). Positions 567 to 639 (CLICGDEASG…AGMVLGGRKF (73 aa)) form a DNA-binding region, nuclear receptor. The residue at position 676 (serine 676) is a Phosphoserine. The 235-residue stretch at 679-913 (QDIQLIPPLI…EFPEMMSEVI (235 aa)) folds into the NR LBD domain. The tract at residues 687–933 (LINLLMSIEP…MVKPLLFHKK (247 aa)) is AF2; mediates transcriptional activation. Arginine 766 contacts progesterone.

Belongs to the nuclear hormone receptor family. NR3 subfamily. Interacts with SMARD1 and UNC45A. Interacts with CUEDC2; the interaction promotes ubiquitination, decreases sumoylation, and represses transcriptional activity. Interacts with PIAS3; the interaction promotes sumoylation of PR in a hormone-dependent manner, inhibits DNA-binding, and alters nuclear export. Interacts with SP1; the interaction requires ligand-induced phosphorylation on Ser-345 by ERK1/2 MAPK. Interacts with PRMT2. Isoform A interacts with NCOR2. Isoform B (but not isoform A) interacts with NCOA2 and NCOA1. Isoform B (but not isoform A) interacts with KLF9. Interacts with GTF2B. In terms of processing, phosphorylated on multiple serine sites. Several of these sites are hormone-dependent. Phosphorylation on Ser-294 occurs preferentially on isoform B, is highly hormone-dependent and modulates ubiquitination and sumoylation on Lys-388. Phosphorylation on Ser-102 and Ser-345 also requires induction by hormone. Basal phosphorylation on Ser-81, Ser-162, Ser-190 and Ser-400 is increased in response to progesterone and can be phosphorylated in vitro by the CDK2-A1 complex. Increased levels of phosphorylation on Ser-400 also in the presence of EGF, heregulin, IGF, PMA and FBS. Phosphorylation at this site by CDK2 is ligand-independent, and increases nuclear translocation and transcriptional activity. Phosphorylation at Ser-162 and Ser-294, but not at Ser-190, is impaired during the G(2)/M phase of the cell cycle. Phosphorylation on Ser-345 by ERK1/2 MAPK is required for interaction with SP1. Post-translationally, sumoylation is hormone-dependent and represses transcriptional activity. Sumoylation on all three sites is enhanced by PIAS3. Desumoylated by SENP1. Sumoylation on Lys-388, the main site of sumoylation, is repressed by ubiquitination on the same site, and modulated by phosphorylation at Ser-294. Ubiquitination is hormone-dependent and represses sumoylation on the same site. Promoted by MAPK-mediated phosphorylation on Ser-294. Ubiquitinated by UBR5, leading to its degradation: UBR5 specifically recognizes and binds ligand-bound PGR when it is not associated with coactivators (NCOAs). In presence of NCOAs, the UBR5-degron is not accessible, preventing its ubiquitination and degradation. In terms of processing, palmitoylated by ZDHHC7 and ZDHHC21. Palmitoylation is required for plasma membrane targeting and for rapid intracellular signaling via ERK and AKT kinases and cAMP generation. In terms of tissue distribution, in reproductive tissues the expression of isoform A and isoform B varies as a consequence of developmental and hormonal status. Isoform A and isoform B are expressed in comparable levels in uterine glandular epithelium during the proliferative phase of the menstrual cycle. Expression of isoform B but not of isoform A persists in the glands during mid-secretory phase. In the stroma, isoform A is the predominant form throughout the cycle. Heterogeneous isoform expression between the glands of the endometrium basalis and functionalis is implying region-specific responses to hormonal stimuli.

It is found in the nucleus. The protein localises to the cytoplasm. It localises to the mitochondrion outer membrane. The steroid hormones and their receptors are involved in the regulation of eukaryotic gene expression and affect cellular proliferation and differentiation in target tissues. Depending on the isoform, progesterone receptor functions as a transcriptional activator or repressor. Functionally, ligand-dependent transdominant repressor of steroid hormone receptor transcriptional activity including repression of its isoform B, MR and ER. Transrepressional activity may involve recruitment of corepressor NCOR2. Its function is as follows. Transcriptional activator of several progesteron-dependent promoters in a variety of cell types. Involved in activation of SRC-dependent MAPK signaling on hormone stimulation. In terms of biological role, increases mitochondrial membrane potential and cellular respiration upon stimulation by progesterone. This is Progesterone receptor (PGR) from Homo sapiens (Human).